A 111-amino-acid chain; its full sequence is Large ribosomal subunit protein eL33x (111 aa).

It belongs to the eukaryotic ribosomal protein eL33 family.

The polypeptide is Large ribosomal subunit protein eL33x (RPL35AD) (Arabidopsis thaliana (Mouse-ear cress)).